The sequence spans 916 residues: Protein translocase subunit SecA (916 aa).

Residues glutamine 88, 106-110 (GEGKT), and aspartate 519 contribute to the ATP site. 4 residues coordinate Zn(2+): cysteine 902, cysteine 904, cysteine 913, and cysteine 914.

This sequence belongs to the SecA family. Monomer and homodimer. Part of the essential Sec protein translocation apparatus which comprises SecA, SecYEG and auxiliary proteins SecDF. Other proteins may also be involved. Requires Zn(2+) as cofactor.

Its subcellular location is the cell inner membrane. It is found in the cytoplasm. The catalysed reaction is ATP + H2O + cellular proteinSide 1 = ADP + phosphate + cellular proteinSide 2.. Functionally, part of the Sec protein translocase complex. Interacts with the SecYEG preprotein conducting channel. Has a central role in coupling the hydrolysis of ATP to the transfer of proteins into and across the cell membrane, serving as an ATP-driven molecular motor driving the stepwise translocation of polypeptide chains across the membrane. The chain is Protein translocase subunit SecA from Treponema pallidum (strain Nichols).